The chain runs to 71 residues: Translational regulator CsrA (71 aa).

Belongs to the CsrA/RsmA family. Homodimer; the beta-strands of each monomer intercalate to form a hydrophobic core, while the alpha-helices form wings that extend away from the core.

Its subcellular location is the cytoplasm. In terms of biological role, a key translational regulator that binds mRNA to regulate translation initiation and/or mRNA stability. Mediates global changes in gene expression, shifting from rapid growth to stress survival by linking envelope stress, the stringent response and the catabolite repression systems. Usually binds in the 5'-UTR; binding at or near the Shine-Dalgarno sequence prevents ribosome-binding, repressing translation, binding elsewhere in the 5'-UTR can activate translation and/or stabilize the mRNA. Its function is antagonized by small RNA(s). The chain is Translational regulator CsrA from Pseudoalteromonas atlantica (strain T6c / ATCC BAA-1087).